Here is a 437-residue protein sequence, read N- to C-terminus: UDP-N-acetylmuramate--L-alanine ligase (437 aa).

108 to 114 (GAHGKTS) is an ATP binding site.

The protein belongs to the MurCDEF family.

The protein localises to the cytoplasm. The catalysed reaction is UDP-N-acetyl-alpha-D-muramate + L-alanine + ATP = UDP-N-acetyl-alpha-D-muramoyl-L-alanine + ADP + phosphate + H(+). The protein operates within cell wall biogenesis; peptidoglycan biosynthesis. Its function is as follows. Cell wall formation. The sequence is that of UDP-N-acetylmuramate--L-alanine ligase from Staphylococcus haemolyticus (strain JCSC1435).